We begin with the raw amino-acid sequence, 542 residues long: Chaperonin GroEL 5 (542 aa).

Residues 30-33, Lys-51, 87-91, Gly-415, and Asp-496 each bind ATP; these read TLGP and DGTTT.

The protein belongs to the chaperonin (HSP60) family. Forms a cylinder of 14 subunits composed of two heptameric rings stacked back-to-back. Interacts with the co-chaperonin GroES.

It is found in the cytoplasm. The enzyme catalyses ATP + H2O + a folded polypeptide = ADP + phosphate + an unfolded polypeptide.. Together with its co-chaperonin GroES, plays an essential role in assisting protein folding. The GroEL-GroES system forms a nano-cage that allows encapsulation of the non-native substrate proteins and provides a physical environment optimized to promote and accelerate protein folding. This Rhizobium meliloti (strain 1021) (Ensifer meliloti) protein is Chaperonin GroEL 5.